Consider the following 572-residue polypeptide: Proline--tRNA ligase (572 aa).

It belongs to the class-II aminoacyl-tRNA synthetase family. ProS type 1 subfamily. As to quaternary structure, homodimer.

It is found in the cytoplasm. The catalysed reaction is tRNA(Pro) + L-proline + ATP = L-prolyl-tRNA(Pro) + AMP + diphosphate. Functionally, catalyzes the attachment of proline to tRNA(Pro) in a two-step reaction: proline is first activated by ATP to form Pro-AMP and then transferred to the acceptor end of tRNA(Pro). As ProRS can inadvertently accommodate and process non-cognate amino acids such as alanine and cysteine, to avoid such errors it has two additional distinct editing activities against alanine. One activity is designated as 'pretransfer' editing and involves the tRNA(Pro)-independent hydrolysis of activated Ala-AMP. The other activity is designated 'posttransfer' editing and involves deacylation of mischarged Ala-tRNA(Pro). The misacylated Cys-tRNA(Pro) is not edited by ProRS. The sequence is that of Proline--tRNA ligase from Salmonella choleraesuis (strain SC-B67).